We begin with the raw amino-acid sequence, 307 residues long: Putative lipid kinase SE_0507 (307 aa).

Residues 3–139 enclose the DAGKc domain; sequence QPYNHGVLFY…YDVLKVNDLY (137 aa). Residues serine 44, 74-80, and threonine 101 each bind ATP; that span reads GDGTLNE. Mg(2+) is bound by residues serine 220, aspartate 223, and arginine 225. Glutamate 281 serves as the catalytic Proton acceptor.

It belongs to the diacylglycerol/lipid kinase family. The cofactor is Mg(2+).

Its function is as follows. May catalyze the ATP-dependent phosphorylation of lipids other than diacylglycerol (DAG). In Staphylococcus epidermidis (strain ATCC 12228 / FDA PCI 1200), this protein is Putative lipid kinase SE_0507.